A 298-amino-acid polypeptide reads, in one-letter code: Phosphatidylserine decarboxylase proenzyme (298 aa).

Catalysis depends on charge relay system; for autoendoproteolytic cleavage activity residues Asp113, His169, and Ser256. The Schiff-base intermediate with substrate; via pyruvic acid; for decarboxylase activity role is filled by Ser256. At Ser256 the chain carries Pyruvic acid (Ser); by autocatalysis.

This sequence belongs to the phosphatidylserine decarboxylase family. PSD-B subfamily. Prokaryotic type II sub-subfamily. In terms of assembly, heterodimer of a large membrane-associated beta subunit and a small pyruvoyl-containing alpha subunit. Requires pyruvate as cofactor. Is synthesized initially as an inactive proenzyme. Formation of the active enzyme involves a self-maturation process in which the active site pyruvoyl group is generated from an internal serine residue via an autocatalytic post-translational modification. Two non-identical subunits are generated from the proenzyme in this reaction, and the pyruvate is formed at the N-terminus of the alpha chain, which is derived from the carboxyl end of the proenzyme. The autoendoproteolytic cleavage occurs by a canonical serine protease mechanism, in which the side chain hydroxyl group of the serine supplies its oxygen atom to form the C-terminus of the beta chain, while the remainder of the serine residue undergoes an oxidative deamination to produce ammonia and the pyruvoyl prosthetic group on the alpha chain. During this reaction, the Ser that is part of the protease active site of the proenzyme becomes the pyruvoyl prosthetic group, which constitutes an essential element of the active site of the mature decarboxylase.

It localises to the cell membrane. The catalysed reaction is a 1,2-diacyl-sn-glycero-3-phospho-L-serine + H(+) = a 1,2-diacyl-sn-glycero-3-phosphoethanolamine + CO2. Its pathway is phospholipid metabolism; phosphatidylethanolamine biosynthesis; phosphatidylethanolamine from CDP-diacylglycerol: step 2/2. Functionally, catalyzes the formation of phosphatidylethanolamine (PtdEtn) from phosphatidylserine (PtdSer). This Desulfitobacterium hafniense (strain DSM 10664 / DCB-2) protein is Phosphatidylserine decarboxylase proenzyme.